A 493-amino-acid polypeptide reads, in one-letter code: Ketol-acid reductoisomerase (NADP(+)) (493 aa).

Positions 14–208 (LDQLGRCRFM…GGHRAGVLES (195 aa)) constitute a KARI N-terminal Rossmann domain. Residues 45 to 48 (CGAQ), arginine 68, arginine 76, serine 78, and 108 to 110 (DKQ) contribute to the NADP(+) site. Histidine 132 is a catalytic residue. Position 158 (glycine 158) interacts with NADP(+). 2 consecutive KARI C-terminal knotted domains span residues 209 to 345 (SFVA…APKG) and 346 to 486 (ENIK…MTDM). Mg(2+)-binding residues include aspartate 217, glutamate 221, glutamate 390, and glutamate 394. Serine 415 contacts substrate.

Belongs to the ketol-acid reductoisomerase family. It depends on Mg(2+) as a cofactor.

The enzyme catalyses (2R)-2,3-dihydroxy-3-methylbutanoate + NADP(+) = (2S)-2-acetolactate + NADPH + H(+). It carries out the reaction (2R,3R)-2,3-dihydroxy-3-methylpentanoate + NADP(+) = (S)-2-ethyl-2-hydroxy-3-oxobutanoate + NADPH + H(+). Its pathway is amino-acid biosynthesis; L-isoleucine biosynthesis; L-isoleucine from 2-oxobutanoate: step 2/4. The protein operates within amino-acid biosynthesis; L-valine biosynthesis; L-valine from pyruvate: step 2/4. Its function is as follows. Involved in the biosynthesis of branched-chain amino acids (BCAA). Catalyzes an alkyl-migration followed by a ketol-acid reduction of (S)-2-acetolactate (S2AL) to yield (R)-2,3-dihydroxy-isovalerate. In the isomerase reaction, S2AL is rearranged via a Mg-dependent methyl migration to produce 3-hydroxy-3-methyl-2-ketobutyrate (HMKB). In the reductase reaction, this 2-ketoacid undergoes a metal-dependent reduction by NADPH to yield (R)-2,3-dihydroxy-isovalerate. This is Ketol-acid reductoisomerase (NADP(+)) from Histophilus somni (strain 2336) (Haemophilus somnus).